A 216-amino-acid chain; its full sequence is Large ribosomal subunit protein uL1A (216 aa).

Residues Ser-85 and Ser-128 each carry the phosphoserine modification.

This sequence belongs to the universal ribosomal protein uL1 family. As to quaternary structure, component of the large ribosomal subunit (LSU). Mature yeast ribosomes consist of a small (40S) and a large (60S) subunit. The 40S small subunit contains 1 molecule of ribosomal RNA (18S rRNA) and at least 33 different proteins. The large 60S subunit contains 3 rRNA molecules (25S, 5.8S and 5S rRNA) and at least 46 different proteins. uL1 forms part of the L1 stalk.

The protein localises to the cytoplasm. In terms of biological role, component of the ribosome, a large ribonucleoprotein complex responsible for the synthesis of proteins in the cell. The small ribosomal subunit (SSU) binds messenger RNAs (mRNAs) and translates the encoded message by selecting cognate aminoacyl-transfer RNA (tRNA) molecules. The large subunit (LSU) contains the ribosomal catalytic site termed the peptidyl transferase center (PTC), which catalyzes the formation of peptide bonds, thereby polymerizing the amino acids delivered by tRNAs into a polypeptide chain. The nascent polypeptides leave the ribosome through a tunnel in the LSU and interact with protein factors that function in enzymatic processing, targeting, and the membrane insertion of nascent chains at the exit of the ribosomal tunnel. uL1 forms part of the L1 stalk, a mobile element that plays a role in evacuating the exit-site tRNA. The sequence is that of Large ribosomal subunit protein uL1A (rpl102) from Schizosaccharomyces pombe (strain 972 / ATCC 24843) (Fission yeast).